The primary structure comprises 269 residues: Phosphate import ATP-binding protein PstB (269 aa).

The 243-residue stretch at 22–264 (AEVRDLNFYY…PVQQKTADYV (243 aa)) folds into the ABC transporter domain. Position 54–61 (54–61 (GPSGCGKT)) interacts with ATP.

The protein belongs to the ABC transporter superfamily. Phosphate importer (TC 3.A.1.7) family. The complex is composed of two ATP-binding proteins (PstB), two transmembrane proteins (PstC and PstA) and a solute-binding protein (PstS).

The protein localises to the cell inner membrane. The catalysed reaction is phosphate(out) + ATP + H2O = ADP + 2 phosphate(in) + H(+). Its function is as follows. Part of the ABC transporter complex PstSACB involved in phosphate import. Responsible for energy coupling to the transport system. This Thermosynechococcus vestitus (strain NIES-2133 / IAM M-273 / BP-1) protein is Phosphate import ATP-binding protein PstB.